Reading from the N-terminus, the 367-residue chain is Peptide chain release factor 2 (367 aa).

An N5-methylglutamine modification is found at glutamine 254.

It belongs to the prokaryotic/mitochondrial release factor family. Post-translationally, methylated by PrmC. Methylation increases the termination efficiency of RF2.

It is found in the cytoplasm. In terms of biological role, peptide chain release factor 2 directs the termination of translation in response to the peptide chain termination codons UGA and UAA. This Bordetella bronchiseptica (strain ATCC BAA-588 / NCTC 13252 / RB50) (Alcaligenes bronchisepticus) protein is Peptide chain release factor 2.